The following is a 1067-amino-acid chain: Protein bric-a-brac 2 (1067 aa).

Residues 30–121 (MAPPEEPKMV…PPRPLTSSEV (92 aa)) are disordered. Basic and acidic residues-rich tracts occupy residues 47–62 (HLED…REVE) and 86–98 (KSPE…ELVK). Tyr-55 carries the phosphotyrosine modification. 3 positions are modified to phosphoserine: Ser-56, Ser-87, and Ser-147. Residues 223-288 (VDVTLSCEGH…MYKGEINVCQ (66 aa)) enclose the BTB domain. Disordered stretches follow at residues 312–412 (GRGE…QSQP), 444–505 (ANQR…AAQH), and 525–563 (GAAG…SHHD). Acidic residues predominate over residues 326–335 (FDDEDEEEEL). Ser-377 bears the Phosphoserine mark. Residue Thr-384 is modified to Phosphothreonine. Over residues 391 to 412 (GGESEISERGSSGTPGQSQSQP) the composition is skewed to low complexity. Composition is skewed to gly residues over residues 525 to 538 (GAAG…GSGS) and 545 to 556 (GGTGVAGSGAGA). Residues 635–687 (FRERGPLKSWRPEAMAEAIFSVLKEGLSLSQAARKFDIPYPTFVLYANRVHNM) enclose the HTH psq-type domain. The segment at residues 645–690 (RPEAMAEAIFSVLKEGLSLSQAARKFDIPYPTFVLYANRVHNMLGP) is a DNA-binding region (H-T-H motif). The a.T hook DNA-binding region spans 697–708 (DPRPKARGRPQR). Disordered stretches follow at residues 796–829 (QILS…PHAQ), 860–879 (AKHQ…PDLS), and 891–967 (VMPS…PYSA). Residues 812–829 (AHHQQQPSHHQQQSPHAQ) are compositionally biased toward low complexity. Residues 904 to 914 (AAPNSAASYAR) show a composition bias toward low complexity. A compositionally biased stretch (basic and acidic residues) spans 915 to 933 (ELSRERERDRERERERELS). Residues 934 to 949 (RQYGSQSRGSSSGSGS) show a composition bias toward low complexity.

Leg imaginal disk at the central region of the tarsus and in eye antenna disk at the basal cylinder.

It is found in the nucleus. Probably acts as a transcriptional regulator. Required for the specification of the tarsal segment. Also involved in antenna development. This Drosophila melanogaster (Fruit fly) protein is Protein bric-a-brac 2 (bab2).